The primary structure comprises 285 residues: MVSTMMNEQQQGGMTHGYNVEALKNKPKSKPGKATDTCLEVSDLQLWYGQDKVLKGVDMEIPRGRITAFIGPSGCGKSTLLRCFNRMNDLIDNCRIEGHIRIDGEDIYDRRVDIPELRRRVGMVFQKPNPFPKSIYENVAYGLRLQGVRNRRVLDEVVERSLKRAALWDEVKDRLHENALGLSGGQQQRLVIARAVAVEPEVLLLDEPASALDPLATLKIEELMFELKEEYTIAIVTHNMQQAARVSDYTAFMYLGELVEFNDTDTLFTTPAKKQTEDYITGRYG.

In terms of domain architecture, ABC transporter spans 39 to 280; it reads LEVSDLQLWY…PAKKQTEDYI (242 aa). 71–78 contacts ATP; the sequence is GPSGCGKS.

Belongs to the ABC transporter superfamily. Phosphate importer (TC 3.A.1.7) family. As to quaternary structure, the complex is composed of two ATP-binding proteins (PstB), two transmembrane proteins (PstC and PstA) and a solute-binding protein (PstS).

Its subcellular location is the cell inner membrane. The enzyme catalyses phosphate(out) + ATP + H2O = ADP + 2 phosphate(in) + H(+). In terms of biological role, part of the ABC transporter complex PstSACB involved in phosphate import. Responsible for energy coupling to the transport system. This is Phosphate import ATP-binding protein PstB from Alkalilimnicola ehrlichii (strain ATCC BAA-1101 / DSM 17681 / MLHE-1).